Consider the following 147-residue polypeptide: Deoxyuridine 5'-triphosphate nucleotidohydrolase (147 aa).

R24 is a Mg(2+) binding site. DUTP is bound by residues 68-70 (PRS), 82-85 (GVID), Y88, G93, I95, and R111.

The protein belongs to the dUTPase family. Requires Mg(2+) as cofactor.

The catalysed reaction is dUTP + H2O = dUMP + diphosphate + H(+). Functionally, this enzyme is involved in nucleotide metabolism: it produces dUMP, the immediate precursor of thymidine nucleotides and it decreases the intracellular concentration of dUTP so that uracil cannot be incorporated into DNA. This Homo sapiens (Human) protein is Deoxyuridine 5'-triphosphate nucleotidohydrolase (OPG046).